Consider the following 248-residue polypeptide: Pulmonary surfactant-associated protein A (248 aa).

The first 20 residues, 1-20 (MSLCSLAFTLFLTVVAGIKC), serve as a signal peptide directing secretion. One can recognise a Collagen-like domain in the interval 28-100 (GSPGIPGAPG…PGERGLPGFP (73 aa)). 10 positions are modified to 4-hydroxyproline: proline 30, proline 33, proline 36, proline 42, proline 54, proline 57, proline 63, proline 67, proline 70, and proline 76. The interval 31 to 99 (GIPGAPGNHG…EPGERGLPGF (69 aa)) is disordered. Positions 42 to 51 (PGRDGRDGVK) are enriched in basic and acidic residues. Over residues 54–65 (PGPPGPMGPPGG) the composition is skewed to pro residues. Residues 69-82 (LPGRDGLPGAPGAP) show a composition bias toward low complexity. Positions 84-93 (ERGDKGEPGE) are enriched in basic and acidic residues. The C-type lectin domain occupies 133–248 (SVGDKVFSTN…LQYRLAVCEF (116 aa)). 2 cysteine pairs are disulfide-bonded: cysteine 155-cysteine 246 and cysteine 224-cysteine 238. The N-linked (GlcNAc...) asparagine glycan is linked to asparagine 207. Glutamate 215, arginine 217, asparagine 234, and aspartate 235 together coordinate Ca(2+).

It belongs to the SFTPA family. In terms of assembly, oligomeric complex of 6 set of homotrimers.

It is found in the secreted. It localises to the extracellular space. Its subcellular location is the extracellular matrix. The protein localises to the surface film. Its function is as follows. In presence of calcium ions, it binds to surfactant phospholipids and contributes to lower the surface tension at the air-liquid interface in the alveoli of the mammalian lung and is essential for normal respiration. Enhances the expression of MYO18A/SP-R210 on alveolar macrophages. The polypeptide is Pulmonary surfactant-associated protein A (Sftpa1) (Rattus norvegicus (Rat)).